Consider the following 1562-residue polypeptide: Phospholipid-transporting ATPase dnf1 (1562 aa).

Disordered regions lie at residues 1 to 38 (MKSSGIAGDSNGFETNFLNETTNREEDGAFNWNAADDG), 55 to 94 (LPLGIDENELDEIDINGDSKKLDSVEVDESHDVNSPSDSR), 115 to 134 (TPSTKTEQTSKGKGKKKKAH), and 146 to 166 (PLDDIEPTSPREASPVFNGRP). The Extracellular portion of the chain corresponds to 1–275 (MKSSGIAGDS…IAIMQMIPGW (275 aa)). The span at 12–21 (GFETNFLNET) shows a compositional bias: polar residues. The span at 60–69 (DENELDEIDI) shows a compositional bias: acidic residues. Residues 71-86 (GDSKKLDSVEVDESHD) show a composition bias toward basic and acidic residues. Residues 276–296 (STTGTYTTIIPLLIFISIAIL) form a helical membrane-spanning segment. Topologically, residues 297-574 (REGFDNYRRY…APSMQKVTNR (278 aa)) are cytoplasmic. The interval 347-406 (SQESASRSTIRSTDEREPERTSEDPPQLPPSPSSPSSPALSVKPNIDPQPPLYNSTLTTT) is disordered. Over residues 358-369 (STDEREPERTSE) the composition is skewed to basic and acidic residues. Positions 372–381 (PQLPPSPSSP) are enriched in pro residues. Residues 575–595 (IVIFIFALVVSMAIYCTAAYF) form a helical membrane-spanning segment. Over 596-614 (VWQKKVERKLWYLTNSKLS) the chain is Extracellular. A helical transmembrane segment spans residues 615–635 (FVPILVSFIILYNTMVPISLY). Topologically, residues 636-1309 (VSMEIIRVFQ…YILGTFYKEQ (674 aa)) are cytoplasmic. Aspartate 684 acts as the 4-aspartylphosphate intermediate in catalysis. ATP contacts are provided by aspartate 684, lysine 685, threonine 686, glutamate 794, phenylalanine 843, serine 845, lysine 848, and lysine 866. Residue aspartate 684 coordinates Mg(2+). Position 686 (threonine 686) interacts with Mg(2+). Serine 954 is subject to Phosphoserine. ATP is bound by residues arginine 1022, threonine 1023, threonine 1102, glycine 1103, aspartate 1104, 1181–1188 (VIVIDGST), arginine 1216, and lysine 1222. Position 1243 (aspartate 1243) interacts with Mg(2+). Residues asparagine 1246 and aspartate 1247 each coordinate ATP. The helical transmembrane segment at 1310-1330 (FFFLMQAIMQPFVGYTGQSLY) threads the bilayer. Residues 1331 to 1332 (ES) lie on the Extracellular side of the membrane. A helical membrane pass occupies residues 1333–1353 (WGLTCFNTLFSSLCVIGLGIF). Residues 1354–1381 (EKDLSASTVIAVPELYQKGINNEAFNWR) lie on the Cytoplasmic side of the membrane. A helical membrane pass occupies residues 1382–1402 (VYFGWCSIAFIQAFLVFYVTY). Residues 1403 to 1414 (SLFGMKELNDNN) are Extracellular-facing. The chain crosses the membrane as a helical span at residues 1415-1435 (IFAYGQLIFTAAIFIMNFKLV). The Cytoplasmic segment spans residues 1436–1443 (FIEMQYIN). The chain crosses the membrane as a helical span at residues 1444–1464 (IISIIVLVLTSLAWFLFNIFI). Residues 1465-1490 (SEHYPDKNLYLARSQFLHHFGKNPSW) are Extracellular-facing. The helical transmembrane segment at 1491–1511 (WLTMLFVMVCALTIDIVAQML) threads the bilayer. Residues 1512–1562 (RRTLRPTDTDIFVEMENDAFVRSRFEQESGEFLQANAPSVDEIEQYLKSRD) lie on the Cytoplasmic side of the membrane.

It belongs to the cation transport ATPase (P-type) (TC 3.A.3) family. Type IV subfamily. Mg(2+) is required as a cofactor.

The protein resides in the golgi apparatus. The protein localises to the trans-Golgi network membrane. Its subcellular location is the endosome membrane. It catalyses the reaction ATP + H2O + phospholipidSide 1 = ADP + phosphate + phospholipidSide 2.. The enzyme catalyses a 1,2-diacyl-sn-glycero-3-phosphocholine(out) + ATP + H2O = a 1,2-diacyl-sn-glycero-3-phosphocholine(in) + ADP + phosphate + H(+). It carries out the reaction a 1,2-diacyl-sn-glycero-3-phosphoethanolamine(out) + ATP + H2O = a 1,2-diacyl-sn-glycero-3-phosphoethanolamine(in) + ADP + phosphate + H(+). Functionally, catalytic component of a P4-ATPase flippase complex which catalyzes the hydrolysis of ATP coupled to the transport of phosphatidylcholine and small amounts of phosphatidylethanolamine from the lumen to the cytosolic leaflet of the trans-Golgi network and ensures the maintenance of asymmetric distribution of phospholipids. May be involved in transport from early endosomes to the trans-Golgi network (TGN). The polypeptide is Phospholipid-transporting ATPase dnf1 (Schizosaccharomyces pombe (strain 972 / ATCC 24843) (Fission yeast)).